We begin with the raw amino-acid sequence, 1088 residues long: Protein unc-13 homolog D (1088 aa).

A disordered region spans residues 26–46; it reads VRDLQDPPPQATPEVQVQSHH. Residues 92 to 239 enclose the C2 1 domain; sequence QPEEHQQMLQ…FKEARKDKGQ (148 aa). Positions 127 and 133 each coordinate Ca(2+). At S150 the chain carries Phosphoserine. Positions 206 and 208 each coordinate Ca(2+). The interaction with RAB27A stretch occupies residues 240 to 543; sequence DDFLGNVMLR…AKRVQDHTAA (304 aa). The MHD1 domain occupies 557-675; that stretch reads FQLYVSLREF…RLALVYCSLI (119 aa). The 108-residue stretch at 786-893 folds into the MHD2 domain; sequence EDAILPLMKF…ASSRELIQKY (108 aa). In terms of domain architecture, C2 2 spans 908–1033; that stretch reads RLGAVTVKAS…PGLTGCVEPG (126 aa). Residues L938, D939, D945, D1003, D1005, and D1011 each contribute to the Ca(2+) site.

It belongs to the unc-13 family. Interacts with RAB27A and DOC2A. Interacts with RhoG; the interaction increases RhoG affinity to the membrane lipids, targets Unc13d to membrane lipids and facilitates cytotoxic granule (CG) docking to the plasma membrane. Ca(2+) serves as cofactor. Expressed in lung bronchial epithelium goblet/mucous cells. Also expressed in spleen and testis. Expressed at very low levels in heart muscle, kidney, liver, brain and skeletal muscle.

Its subcellular location is the cytoplasm. The protein resides in the membrane. The protein localises to the late endosome. It localises to the recycling endosome. It is found in the lysosome. Functionally, plays a role in cytotoxic granule exocytosis in lymphocytes. Required for both granule maturation and granule docking and priming at the immunologic synapse. Regulates assembly of recycling and late endosomal structures, leading to the formation of an endosomal exocytic compartment that fuses with perforin-containing granules at the immunologic synapse and licences them for exocytosis. Regulates Ca(2+)-dependent secretory lysosome exocytosis in mast cells. This Rattus norvegicus (Rat) protein is Protein unc-13 homolog D (Unc13d).